An 89-amino-acid chain; its full sequence is Cell division topological specificity factor (89 aa).

It belongs to the MinE family.

In terms of biological role, prevents the cell division inhibition by proteins MinC and MinD at internal division sites while permitting inhibition at polar sites. This ensures cell division at the proper site by restricting the formation of a division septum at the midpoint of the long axis of the cell. The sequence is that of Cell division topological specificity factor from Clostridium beijerinckii (strain ATCC 51743 / NCIMB 8052) (Clostridium acetobutylicum).